Here is a 90-residue protein sequence, read N- to C-terminus: Probable Fe(2+)-trafficking protein (90 aa).

It belongs to the Fe(2+)-trafficking protein family.

Its function is as follows. Could be a mediator in iron transactions between iron acquisition and iron-requiring processes, such as synthesis and/or repair of Fe-S clusters in biosynthetic enzymes. In Polynucleobacter asymbioticus (strain DSM 18221 / CIP 109841 / QLW-P1DMWA-1) (Polynucleobacter necessarius subsp. asymbioticus), this protein is Probable Fe(2+)-trafficking protein.